The sequence spans 204 residues: Glycerol-3-phosphate acyltransferase (204 aa).

The next 5 membrane-spanning stretches (helical) occupy residues 8–28 (ILIF…CYIF), 53–73 (VPAA…VVIA), 81–101 (FITA…IFFG), 116–136 (FGFS…VAII), and 155–175 (VIFT…IIIL).

The protein belongs to the PlsY family. Probably interacts with PlsX.

It localises to the cell inner membrane. The catalysed reaction is an acyl phosphate + sn-glycerol 3-phosphate = a 1-acyl-sn-glycero-3-phosphate + phosphate. Its pathway is lipid metabolism; phospholipid metabolism. In terms of biological role, catalyzes the transfer of an acyl group from acyl-phosphate (acyl-PO(4)) to glycerol-3-phosphate (G3P) to form lysophosphatidic acid (LPA). This enzyme utilizes acyl-phosphate as fatty acyl donor, but not acyl-CoA or acyl-ACP. The chain is Glycerol-3-phosphate acyltransferase from Francisella tularensis subsp. holarctica (strain FTNF002-00 / FTA).